Consider the following 955-residue polypeptide: MSQNTPSLRELEHHNAFVERHIGPNDAEIAQMLDVVGHASLDAMTDAIVPAKIKSPAPLALPESMTEVQALAKIRAIADKNTVLRSFIGQGYYGTHTPNVILRNILENPAWYTAYTPYQAEISQGRMEALINFQTLCADLTGMEIANASLLDEATAAAEAMTLAKRSAKSKSDTFFVHDAVHPQTLELLRTRAEPMGIVLRVGTPAEALEAEAFGLLLQYPDTFGQVGDYKALVDAVHARGGLVAVATDLLALTLLAAPGEWGADIVVGNSQRFGVPFGFGGPHAAFMACRDAYKRSMPGRLIGVSIDAQGNPAYRLTLQTREQHIRREKATSNICTAQVLLAVMASMYAVYHGPEGLTRIARRTHRLASILAAALRNAGVQVGGDFFDTLHVTGVHADEIHAKARAAGYNLRAIDSDSVGISLDETTTRADIVAVAAVFGASLDVDALDASTADALPAGLLRQSAFLTHPVFNTHHSEHELLRYLRSLADKDLAMDRTMIPLGSCTMKLNATAEMIPVTWPEFSQIHPLVPADQALGYKELIDTLEAMLVECTGYDAVSLQPNSGAQGEYAGLLAIRAYHRSRGEGHRDICLIPDSAHGTNPASAQMCGMKVVVTKTDANGNVDVEDIRLNAEKYSDRLAAIMMTYPSTHGVFEEEVVEICEIIHKHGGQVYTDGANMNALVGVAKPGKWGSDVSHLNLHKTFCIPHGGGGPGVGPCAVKEHLAPFLPGKLGDNGPVGMVSAASFGSASILPISWMYIAMMGREGLRKATQVAQLNANYIAKRLAPHFKTLYTGRNGLVAHECILDVRPLEKTSGIGAEDVAKRLIDFGFHAPTLSFPVAGTLMVEPTESESLHELDRFIDAMIQIREEITAIEDGRLDREDNPLKNAPHTATAVTASEWTHAYPRELAAFPLASLKQSKYWPPVARVDNVYGDKNVMCACIPVDAYKDDEVEA.

K702 carries the N6-(pyridoxal phosphate)lysine modification.

It belongs to the GcvP family. In terms of assembly, the glycine cleavage system is composed of four proteins: P, T, L and H. The cofactor is pyridoxal 5'-phosphate.

It catalyses the reaction N(6)-[(R)-lipoyl]-L-lysyl-[glycine-cleavage complex H protein] + glycine + H(+) = N(6)-[(R)-S(8)-aminomethyldihydrolipoyl]-L-lysyl-[glycine-cleavage complex H protein] + CO2. The glycine cleavage system catalyzes the degradation of glycine. The P protein binds the alpha-amino group of glycine through its pyridoxal phosphate cofactor; CO(2) is released and the remaining methylamine moiety is then transferred to the lipoamide cofactor of the H protein. The polypeptide is Glycine dehydrogenase (decarboxylating) (Stenotrophomonas maltophilia (strain K279a)).